The sequence spans 286 residues: NFU1 iron-sulfur cluster scaffold homolog, mitochondrial (286 aa).

Residues 1–66 (MSKLLTNTAL…RQIQLSGARN (66 aa)) constitute a mitochondrion transit peptide. Residues 182 to 250 (IKELLDTRIR…IPEVESVEQV (69 aa)) are nifU. Positions 219 and 222 each coordinate [4Fe-4S] cluster.

This sequence belongs to the NifU family.

Its subcellular location is the mitochondrion. In terms of biological role, molecular scaffold for [Fe-S] cluster assembly of mitochondrial iron-sulfur proteins. The protein is NFU1 iron-sulfur cluster scaffold homolog, mitochondrial of Drosophila ananassae (Fruit fly).